The sequence spans 218 residues: Large ribosomal subunit protein eL14 (218 aa).

The residue at position 79 (K79) is an N6-acetyllysine. K85 carries the post-translational modification N6-acetyllysine; alternate. K85 is subject to N6-succinyllysine; alternate. K124 is covalently cross-linked (Glycyl lysine isopeptide (Lys-Gly) (interchain with G-Cter in SUMO2)). S139 carries the phosphoserine modification. The disordered stretch occupies residues 159–218 (VPAKKATAAGKKAAAQKAPAQKAPAQKAAGQKAAQPPKAQKGQKPPAQKAPAPKASGKKA). Repeat copies occupy residues 174–178 (QKAPA), 179–183 (QKAPA), 184–188 (QKAAG), 189–193 (QKAAQ), 196–198 (KAQ), and 199–201 (KGQ). The interval 174 to 193 (QKAPAQKAPAQKAAGQKAAQ) is 4 X 5 AA tandem repeats of Q-K-A-[PAS]-X. The interval 196–201 (KAQKGQ) is 2 X 3 AA tandem repeats of K-[GA]-Q. K207 is subject to N6-succinyllysine.

The protein belongs to the eukaryotic ribosomal protein eL14 family. As to quaternary structure, component of the large ribosomal subunit.

Its subcellular location is the cytoplasm. Component of the large ribosomal subunit. The ribosome is a large ribonucleoprotein complex responsible for the synthesis of proteins in the cell. The polypeptide is Large ribosomal subunit protein eL14 (RPL14) (Oryctolagus cuniculus (Rabbit)).